A 92-amino-acid polypeptide reads, in one-letter code: Small ribosomal subunit protein uS19c (92 aa).

It belongs to the universal ribosomal protein uS19 family.

It is found in the plastid. Functionally, protein S19 forms a complex with S13 that binds strongly to the 16S ribosomal RNA. This is Small ribosomal subunit protein uS19c from Cuscuta obtusiflora (Peruvian dodder).